The primary structure comprises 212 residues: Ribosomal RNA small subunit methyltransferase G (212 aa).

Residues Gly80, Leu85, Ala131–Glu132, and Arg146 each bind S-adenosyl-L-methionine.

Belongs to the methyltransferase superfamily. RNA methyltransferase RsmG family.

Its subcellular location is the cytoplasm. The enzyme catalyses guanosine(527) in 16S rRNA + S-adenosyl-L-methionine = N(7)-methylguanosine(527) in 16S rRNA + S-adenosyl-L-homocysteine. In terms of biological role, specifically methylates the N7 position of guanine in position 527 of 16S rRNA. This Xanthomonas oryzae pv. oryzae (strain MAFF 311018) protein is Ribosomal RNA small subunit methyltransferase G.